The primary structure comprises 230 residues: uncharacterized protein (230 aa).

Positions 74, 76, and 105 each coordinate a divalent metal cation.

This sequence belongs to the FAH family.

This is an uncharacterized protein from Pyrococcus horikoshii (strain ATCC 700860 / DSM 12428 / JCM 9974 / NBRC 100139 / OT-3).